The following is a 154-amino-acid chain: Transcriptional repressor NrdR (154 aa).

The segment at 3 to 34 is a zinc-finger region; the sequence is CPFCGANDTKVIDSRLVAEGEQVRRRRECLAC. Positions 49 to 139 constitute an ATP-cone domain; that stretch reads PRLIKTDGSR…VYRRFQDLNE (91 aa).

This sequence belongs to the NrdR family. Zn(2+) serves as cofactor.

Functionally, negatively regulates transcription of bacterial ribonucleotide reductase nrd genes and operons by binding to NrdR-boxes. This is Transcriptional repressor NrdR from Pseudomonas fluorescens (strain ATCC BAA-477 / NRRL B-23932 / Pf-5).